Here is a 205-residue protein sequence, read N- to C-terminus: High frequency lysogenization protein HflD homolog (205 aa).

This sequence belongs to the HflD family.

It is found in the cytoplasm. The protein localises to the cell inner membrane. This is High frequency lysogenization protein HflD homolog from Vibrio parahaemolyticus serotype O3:K6 (strain RIMD 2210633).